The sequence spans 470 residues: Calcium/manganese antiporter SLC30A10 (470 aa).

At 1–10 the chain is on the cytoplasmic side; sequence MGRYSGKTCR. The chain crosses the membrane as a helical span at residues 11 to 31; sequence LLFMLVLTAAFFVAELVSGYL. Over 32–34 the chain is Extracellular; that stretch reads GNS. The chain crosses the membrane as a helical span at residues 35–55; that stretch reads IALLSDSFNMLSDLISLCVGL. Residues 56 to 81 are Cytoplasmic-facing; that stretch reads GSGYIARRGPRGSSATYGYVRAEVVG. A helical membrane pass occupies residues 82–102; sequence ALSNAVFLTALCFTIFVEAVL. Residues 103 to 113 lie on the Extracellular side of the membrane; the sequence is RLARPERIDDP. A helical membrane pass occupies residues 114 to 134; that stretch reads ELVLIVGALGLAVNVVGLLIF. The Cytoplasmic portion of the chain corresponds to 135–233; the sequence is QDCGACFSRC…KSEALNIRGV (99 aa). The segment at 146–223 is disordered; it reads RGRRTRPSQQ…EPEETTKKEK (78 aa). Positions 171 to 184 are enriched in low complexity; the sequence is AATATAPGSGTAVT. A helical membrane pass occupies residues 234–254; that stretch reads LLHVMGDALGSVVVVITAIIF. Residues 255-270 are Extracellular-facing; the sequence is YVQPLRREDPCNWQCY. Residues 271–291 traverse the membrane as a helical segment; that stretch reads IDPSLTVVMVIIILSSAFPLI. The Cytoplasmic portion of the chain corresponds to 292 to 470; the sequence is KETAVILLQM…RQHYENSTHF (179 aa). Residues 300–470 are required for plasma membrane localization; it reads QMVPKGVNME…RQHYENSTHF (171 aa). The tract at residues 451–470 is disordered; that stretch reads QGQTLSKTQERQHYENSTHF. Over residues 458–470 the composition is skewed to basic and acidic residues; sequence TQERQHYENSTHF.

This sequence belongs to the cation diffusion facilitator (CDF) transporter (TC 2.A.4) family. SLC30A subfamily. In terms of assembly, forms homodimers. Forms heterodimers and high-molecular weight oligomers with SLC30A3, SLC30A2 and SLC30A4; heterodimerization is mediated by covalent-bound tyrosine residues, occurs probably in a tissue-specific manner and could mediate the intracellular zinc transport activity into early endosomes and recycling endosomes. As to expression, specifically expressed in fetal liver and fetal brain.

The protein localises to the cell membrane. Its subcellular location is the golgi apparatus membrane. It is found in the recycling endosome membrane. It localises to the early endosome membrane. The catalysed reaction is Mn(2+)(out) + Ca(2+)(in) = Mn(2+)(in) + Ca(2+)(out). It carries out the reaction Zn(2+)(in) = Zn(2+)(out). Calcium:manganese antiporter of the plasma membrane mediating the efflux of intracellular manganese coupled to an active extracellular calcium exchange. Required for intracellular manganese homeostasis, an essential cation for the function of several enzymes, including some crucially important for the metabolism of neurotransmitters and other neuronal metabolic pathways. Manganese can also be cytotoxic and induce oxidative stress, mitochondrial dysfunction and apoptosis. Could also have an intracellular zinc ion transporter activity, directly regulating intracellular zinc ion homeostasis and more indirectly various signaling pathway and biological processes. The polypeptide is Calcium/manganese antiporter SLC30A10 (Mus musculus (Mouse)).